Here is an 82-residue protein sequence, read N- to C-terminus: Cysteine proteinase inhibitor A (82 aa).

It belongs to the cystatin family.

Strong inhibitor of papain and ficin but poor inhibitor of cathepsin H, B and L. This chain is Cysteine proteinase inhibitor A, found in Helianthus annuus (Common sunflower).